Here is a 456-residue protein sequence, read N- to C-terminus: MANLIATDNPIVVVGMGLTGLSVARYLANKGANFFLLDTRKDLPKSTWQQVAELQAKCPSMKVDNGSLDVELLTSAKQIVLSPGVPLATPEIQQAKAAGVEIIGDIDLFLAERKAPVVGITGSNGKSTVTTLVGLAAENAGMNVAVGGNIGVPVLDLLADADVELYVLELSSFQLESVKRAQLDVACVLNVSPDHMDRYPSLAHYCQAKQRIYFGAKKIVYNLEDTLTIPPVMAGVERYGFSSKKAVEENEKHVLLNNDTNALSLNGQDVFSVADIKIAGAHNLKNALAALAICDAANIPFAGLKQALQEFEGLPHRCQWVANKNGVTYINDSKATNIGSAQAAIEGLAGQFKNIVLIAGGDGKGADFSSLGKVINQYVSAVVLIGVDAPKIQAVVDPQVMCVKAQTLNAAVKQAALLAKSGDLVLLSPACASLDMFANYEARGHEFALTVAEVSA.

Residue 122–128 (GSNGKST) coordinates ATP.

It belongs to the MurCDEF family.

Its subcellular location is the cytoplasm. The enzyme catalyses UDP-N-acetyl-alpha-D-muramoyl-L-alanine + D-glutamate + ATP = UDP-N-acetyl-alpha-D-muramoyl-L-alanyl-D-glutamate + ADP + phosphate + H(+). The protein operates within cell wall biogenesis; peptidoglycan biosynthesis. Cell wall formation. Catalyzes the addition of glutamate to the nucleotide precursor UDP-N-acetylmuramoyl-L-alanine (UMA). The sequence is that of UDP-N-acetylmuramoylalanine--D-glutamate ligase from Saccharophagus degradans (strain 2-40 / ATCC 43961 / DSM 17024).